We begin with the raw amino-acid sequence, 485 residues long: MSVPLLKIGVVLSTMAMITNWMSQTLPSLVGLNTTRLSAASGGTLDRSTGVLPTNPEESWQVYSSAQDSEGRCICTVVAPQQTMCSRDARTKQLRQLLEKVQNMSQSIEVLDRRTQRDLQYVEKMENQMKGLESKFRQVEESHKQHLARQFKAIKAKMDELRPLIPVLEEYKADAKLVLQFKEEVQNLTSVLNELQEEIGAYDYDELQSRVSNLEERLRACMQKLACGKLTGISDPVTVKTSGSRFGSWMTDPLAPEGDNRVWYMDGYHNNRFVREYKSMVDFMNTDNFTSHRLPHPWSGTGQVVYNGSIYFNKFQSHIIIRFDLKTETILKTRSLDYAGYNNMYHYAWGGHSDIDLMVDENGLWAVYATNQNAGNIVISKLDPVSLQILQTWNTSYPKRSAGEAFIICGTLYVTNGYSGGTKVHYAYQTNASTYEYIDIPFQNKYSHISMLDYNPKDRALYAWNNGHQTLYNVTLFHVIRSDEL.

Positions 1-24 (MSVPLLKIGVVLSTMAMITNWMSQ) are cleaved as a signal peptide. Residues N33, N103, N187, N288, N307, N394, N431, and N473 are each glycosylated (N-linked (GlcNAc...) asparagine). Residues 87–225 (RDARTKQLRQ…ERLRACMQKL (139 aa)) are a coiled coil. Positions 226–478 (ACGKLTGISD…QTLYNVTLFH (253 aa)) constitute an Olfactomedin-like domain. Residues C227 and C409 are joined by a disulfide bond.

In terms of assembly, homotetramer; disulfide-linked. Dimer of dimers, giving rise to a V-shaped homotretramer. Isoform 1 and isoform 3 interact with RTN4R. Identified in a complex with RTN4R and LINGO1. Peripherally associated with AMPAR complex. AMPAR complex consists of an inner core made of 4 pore-forming GluA/GRIA proteins (GRIA1, GRIA2, GRIA3 and GRIA4) and 4 major auxiliary subunits arranged in a twofold symmetry. One of the two pairs of distinct binding sites is occupied either by CNIH2, CNIH3 or CACNG2, CACNG3. The other harbors CACNG2, CACNG3, CACNG4, CACNG8 or GSG1L. This inner core of AMPAR complex is complemented by outer core constituents binding directly to the GluA/GRIA proteins at sites distinct from the interaction sites of the inner core constituents. Outer core constituents include at least PRRT1, PRRT2, CKAMP44/SHISA9, FRRS1L and NRN1. The proteins of the inner and outer core serve as a platform for other, more peripherally associated AMPAR constituents, including OLFM1. Alone or in combination, these auxiliary subunits control the gating and pharmacology of the AMPAR complex and profoundly impact their biogenesis and protein processing. Interacts with OLFM2. In isoform 3 and isoform 4, the signal peptide is predicted to end in position 17. Expressed in the brain (at protein level). Expressed in the brain, predominantly in the cortex and hippocampus. In the pituitary only the two A-type and in the adrenal glands only the two B-type forms were detected.

It localises to the secreted. The protein localises to the synapse. It is found in the endoplasmic reticulum. Its subcellular location is the cell projection. The protein resides in the axon. It localises to the perikaryon. Contributes to the regulation of axonal growth in the embryonic and adult central nervous system by inhibiting interactions between RTN4R and LINGO1. Inhibits RTN4R-mediated axon growth cone collapse. May play an important role in regulating the production of neural crest cells by the neural tube. May be required for normal responses to olfactory stimuli. In Rattus norvegicus (Rat), this protein is Noelin (Olfm1).